Here is a 472-residue protein sequence, read N- to C-terminus: Argininosuccinate lyase (472 aa).

It belongs to the lyase 1 family. Argininosuccinate lyase subfamily.

The protein resides in the cytoplasm. It catalyses the reaction 2-(N(omega)-L-arginino)succinate = fumarate + L-arginine. It functions in the pathway amino-acid biosynthesis; L-arginine biosynthesis; L-arginine from L-ornithine and carbamoyl phosphate: step 3/3. The sequence is that of Argininosuccinate lyase from Polynucleobacter asymbioticus (strain DSM 18221 / CIP 109841 / QLW-P1DMWA-1) (Polynucleobacter necessarius subsp. asymbioticus).